The chain runs to 119 residues: uncharacterized protein (119 aa).

The next 2 membrane-spanning stretches (helical) occupy residues 52–72 (IVLF…VINI) and 88–108 (VLFS…IFLI).

It localises to the membrane. This is an uncharacterized protein from Dictyostelium discoideum (Social amoeba).